A 202-amino-acid chain; its full sequence is Endothelin-1 (202 aa).

The N-terminal stretch at 1 to 25 (MDYFPMIFALLFVAFQGAPEAAVLG) is a signal peptide. Positions 26 to 50 (TELSTGAESGGERPVPTTPWRPRRS) are excised as a propeptide. The segment at 29–48 (STGAESGGERPVPTTPWRPR) is disordered. 2 cysteine pairs are disulfide-bonded: Cys-53/Cys-67 and Cys-55/Cys-63. The propeptide occupies 74 to 202 (VNTPEHVVPY…DKKVIYSRAH (129 aa)). The interval 110–124 (CQCASQTDKKCQNFC) is endothelin-like.

The protein belongs to the endothelin/sarafotoxin family.

The protein localises to the secreted. Endothelins are endothelium-derived vasoconstrictor peptides. Probable ligand for G-protein coupled receptors EDNRA and EDNRB which activates PTK2B, BCAR1, BCAR3 and, GTPases RAP1 and RHOA cascade in glomerular mesangial cells. Also binds the DEAR/FBXW7-AS1 receptor. Promotes mesenteric arterial wall remodeling via activation of ROCK signaling and subsequent colocalization of NFATC3 with F-actin filaments. NFATC3 then translocates to the nucleus where it subsequently promotes the transcription of the smooth muscle hypertrophy and differentiation marker ACTA2. This chain is Endothelin-1 (EDN1), found in Ovis aries (Sheep).